Consider the following 381-residue polypeptide: Chaperone protein DnaJ (381 aa).

The J domain occupies 5–70; that stretch reads DFYEVLGVSR…QKKAAYDQYG (66 aa). Residues 136–214 form a CR-type zinc finger; it reads GVTKEIEVPT…CHGQGRKQKT (79 aa). Zn(2+) contacts are provided by Cys-149, Cys-152, Cys-166, Cys-169, Cys-188, Cys-191, Cys-202, and Cys-205. 4 CXXCXGXG motif repeats span residues 149–156, 166–173, 188–195, and 202–209; these read CDSCDGSG, CGTCHGHG, CPTCHGKG, and CNECHGQG.

It belongs to the DnaJ family. In terms of assembly, homodimer. Zn(2+) serves as cofactor.

Its subcellular location is the cytoplasm. Its function is as follows. Participates actively in the response to hyperosmotic and heat shock by preventing the aggregation of stress-denatured proteins and by disaggregating proteins, also in an autonomous, DnaK-independent fashion. Unfolded proteins bind initially to DnaJ; upon interaction with the DnaJ-bound protein, DnaK hydrolyzes its bound ATP, resulting in the formation of a stable complex. GrpE releases ADP from DnaK; ATP binding to DnaK triggers the release of the substrate protein, thus completing the reaction cycle. Several rounds of ATP-dependent interactions between DnaJ, DnaK and GrpE are required for fully efficient folding. Also involved, together with DnaK and GrpE, in the DNA replication of plasmids through activation of initiation proteins. The sequence is that of Chaperone protein DnaJ from Vibrio parahaemolyticus serotype O3:K6 (strain RIMD 2210633).